The following is a 737-amino-acid chain: Delta and Notch-like epidermal growth factor-related receptor (737 aa).

Residues 1–25 form the signal peptide; the sequence is MPPRRAQAPGAPLLPVLALLPLLLG. Residues 26–640 lie on the Extracellular side of the membrane; that stretch reads AGPQSGCLAS…LTNMPRHSLY (615 aa). EGF-like domains lie at 44–92 and 94–133; these read APGP…TYCQ and VADP…LNCE. The segment at 44–133 is interaction with NOTCH1; the sequence is APGPCASQPC…NDGYEGLNCE (90 aa). 6 disulfides stabilise this stretch: C48/C59, C53/C80, C82/C91, C98/C108, C103/C121, and C123/C132. The N-linked (GlcNAc...) asparagine glycan is linked to N204. EGF-like domains are found at residues 309-348, 349-390, 392-428, 430-466, and 468-503; these read PGDS…TFCE, EFDA…ELCQ, KIDY…SACE, KVDP…PTCA, and LVDF…LYCE. 23 cysteine pairs are disulfide-bonded: C319–C336, C338–C347, C353–C364, C358–C378, C380–C389, C396–C407, C401–C416, C418–C427, C434–C445, C439–C454, C456–C465, C472–C482, C477–C491, C493–C502, C509–C520, C514–C529, C531–C540, C547–C558, C552–C567, C569–C578, C585–C596, C590–C605, and C607–C616. Residues 505-541 enclose the EGF-like 8; calcium-binding domain; the sequence is EYNECLSAPCLNAATCRDLINGYECVCLAEYKGTHCE. In terms of domain architecture, EGF-like 9 spans 543–579; that stretch reads YKDPCANISCLNGGTCDSEGLNGTCICAPGFTGEECD. N564 carries an N-linked (GlcNAc...) asparagine glycan. Residues 581–617 enclose the EGF-like 10; calcium-binding domain; sequence DINECDSNPCHHAGTCLDQPNGYTCHCPHGWVGANCE. Residues 641–661 form a helical membrane-spanning segment; the sequence is IIIGALCVAFILMLIILIVGI. At 662 to 737 the chain is on the cytoplasmic side; that stretch reads CRISRIEYQG…LVTLIKTKDL (76 aa). The interval 677-680 is interaction with AP1G1 and somatodendritic targeting; that stretch reads YEEF. S685 carries the post-translational modification Phosphoserine. A Phosphotyrosine modification is found at Y711. T714 carries the post-translational modification Phosphothreonine. The residue at position 721 (Y721) is a Phosphotyrosine. S722 carries the post-translational modification Phosphoserine.

Interacts with AP1G1. Interacts with NOTCH1. N-glycosylated. Specifically expressed in brain neurons (at protein level).

It is found in the cell membrane. Its function is as follows. Mediates neuron-glia interaction during astrocytogenesis. May promote differentiation of Bergmann glia during cerebellar development by activating DELTEX-dependent NOTCH1 signaling. The protein is Delta and Notch-like epidermal growth factor-related receptor (Dner) of Mus musculus (Mouse).